Here is a 227-residue protein sequence, read N- to C-terminus: Cytochrome c oxidase subunit 2 (227 aa).

Residues 1-14 (MANHSQLGFQDASS) are Mitochondrial intermembrane-facing. The helical transmembrane segment at 15–45 (PIMEELVEFHDHALMVALAICSLVLYLLTLM) threads the bilayer. Residues 46–58 (LMEKLSSNTVDAQ) lie on the Mitochondrial matrix side of the membrane. The chain crosses the membrane as a helical span at residues 59 to 86 (EVELIWTILPAIVLVLLALPSLQILYMM). Topologically, residues 87–227 (DEIDEPDLTL…FEAWSSLLSS (141 aa)) are mitochondrial intermembrane. His-160, Cys-195, Glu-197, Cys-199, His-203, and Met-206 together coordinate Cu cation. Glu-197 is a Mg(2+) binding site.

This sequence belongs to the cytochrome c oxidase subunit 2 family. In terms of assembly, component of the cytochrome c oxidase (complex IV, CIV), a multisubunit enzyme composed of 14 subunits. The complex is composed of a catalytic core of 3 subunits MT-CO1, MT-CO2 and MT-CO3, encoded in the mitochondrial DNA, and 11 supernumerary subunits COX4I, COX5A, COX5B, COX6A, COX6B, COX6C, COX7A, COX7B, COX7C, COX8 and NDUFA4, which are encoded in the nuclear genome. The complex exists as a monomer or a dimer and forms supercomplexes (SCs) in the inner mitochondrial membrane with NADH-ubiquinone oxidoreductase (complex I, CI) and ubiquinol-cytochrome c oxidoreductase (cytochrome b-c1 complex, complex III, CIII), resulting in different assemblies (supercomplex SCI(1)III(2)IV(1) and megacomplex MCI(2)III(2)IV(2)). Found in a complex with TMEM177, COA6, COX18, COX20, SCO1 and SCO2. Interacts with TMEM177 in a COX20-dependent manner. Interacts with COX20. Interacts with COX16. It depends on Cu cation as a cofactor.

It localises to the mitochondrion inner membrane. It catalyses the reaction 4 Fe(II)-[cytochrome c] + O2 + 8 H(+)(in) = 4 Fe(III)-[cytochrome c] + 2 H2O + 4 H(+)(out). Its function is as follows. Component of the cytochrome c oxidase, the last enzyme in the mitochondrial electron transport chain which drives oxidative phosphorylation. The respiratory chain contains 3 multisubunit complexes succinate dehydrogenase (complex II, CII), ubiquinol-cytochrome c oxidoreductase (cytochrome b-c1 complex, complex III, CIII) and cytochrome c oxidase (complex IV, CIV), that cooperate to transfer electrons derived from NADH and succinate to molecular oxygen, creating an electrochemical gradient over the inner membrane that drives transmembrane transport and the ATP synthase. Cytochrome c oxidase is the component of the respiratory chain that catalyzes the reduction of oxygen to water. Electrons originating from reduced cytochrome c in the intermembrane space (IMS) are transferred via the dinuclear copper A center (CU(A)) of subunit 2 and heme A of subunit 1 to the active site in subunit 1, a binuclear center (BNC) formed by heme A3 and copper B (CU(B)). The BNC reduces molecular oxygen to 2 water molecules using 4 electrons from cytochrome c in the IMS and 4 protons from the mitochondrial matrix. This is Cytochrome c oxidase subunit 2 (MT-CO2) from Gallus gallus (Chicken).